Here is a 117-residue protein sequence, read N- to C-terminus: MSDWIGVALFIVVGIVFGAGGMLTSFLIHPRSKNKFKLETYECGLPTEGATWVRFKTQYFTYALMFVIFDVEVIYLYPWAVSFVDLGLAGLIKMFLFIFILVLGLWYAWKEGALEWK.

Transmembrane regions (helical) follow at residues 4-24 (WIGV…GMLT), 64-84 (LMFV…VSFV), and 86-106 (LGLA…LGLW).

This sequence belongs to the complex I subunit 3 family. As to quaternary structure, NDH-1 is composed of 14 different subunits. Subunits NuoA, H, J, K, L, M, N constitute the membrane sector of the complex.

It localises to the cell membrane. It catalyses the reaction a quinone + NADH + 5 H(+)(in) = a quinol + NAD(+) + 4 H(+)(out). Its function is as follows. NDH-1 shuttles electrons from NADH, via FMN and iron-sulfur (Fe-S) centers, to quinones in the respiratory chain. The immediate electron acceptor for the enzyme in this species is believed to be a menaquinone. Couples the redox reaction to proton translocation (for every two electrons transferred, four hydrogen ions are translocated across the cytoplasmic membrane), and thus conserves the redox energy in a proton gradient. The sequence is that of NADH-quinone oxidoreductase subunit A from Desulforamulus reducens (strain ATCC BAA-1160 / DSM 100696 / MI-1) (Desulfotomaculum reducens).